The sequence spans 206 residues: FMN-dependent NADH:quinone oxidoreductase (206 aa).

FMN contacts are provided by residues 15–17 (SVS), 94–97 (MYNF), and 138–141 (TRGG).

Belongs to the azoreductase type 1 family. Homodimer. It depends on FMN as a cofactor.

It catalyses the reaction 2 a quinone + NADH + H(+) = 2 a 1,4-benzosemiquinone + NAD(+). The enzyme catalyses N,N-dimethyl-1,4-phenylenediamine + anthranilate + 2 NAD(+) = 2-(4-dimethylaminophenyl)diazenylbenzoate + 2 NADH + 2 H(+). In terms of biological role, quinone reductase that provides resistance to thiol-specific stress caused by electrophilic quinones. Functionally, also exhibits azoreductase activity. Catalyzes the reductive cleavage of the azo bond in aromatic azo compounds to the corresponding amines. In Sinorhizobium fredii (strain NBRC 101917 / NGR234), this protein is FMN-dependent NADH:quinone oxidoreductase.